Here is a 360-residue protein sequence, read N- to C-terminus: Phospho-N-acetylmuramoyl-pentapeptide-transferase (360 aa).

Transmembrane regions (helical) follow at residues 27–47, 70–90, 98–118, 134–154, 168–188, 199–219, 239–259, 263–283, 288–308, and 337–357; these read GALF…ISLL, GTPT…ILLW, VWVT…DDYL, LLLE…YSPA, TLLN…VGAG, GLAI…AYLV, LAVV…FNAP, IFMG…IAVA, IVLA…IIQV, and QVVI…LATL.

Belongs to the glycosyltransferase 4 family. MraY subfamily. Mg(2+) is required as a cofactor.

The protein resides in the cell inner membrane. The enzyme catalyses UDP-N-acetyl-alpha-D-muramoyl-L-alanyl-gamma-D-glutamyl-meso-2,6-diaminopimeloyl-D-alanyl-D-alanine + di-trans,octa-cis-undecaprenyl phosphate = di-trans,octa-cis-undecaprenyl diphospho-N-acetyl-alpha-D-muramoyl-L-alanyl-D-glutamyl-meso-2,6-diaminopimeloyl-D-alanyl-D-alanine + UMP. The protein operates within cell wall biogenesis; peptidoglycan biosynthesis. Catalyzes the initial step of the lipid cycle reactions in the biosynthesis of the cell wall peptidoglycan: transfers peptidoglycan precursor phospho-MurNAc-pentapeptide from UDP-MurNAc-pentapeptide onto the lipid carrier undecaprenyl phosphate, yielding undecaprenyl-pyrophosphoryl-MurNAc-pentapeptide, known as lipid I. This Methylorubrum extorquens (strain CM4 / NCIMB 13688) (Methylobacterium extorquens) protein is Phospho-N-acetylmuramoyl-pentapeptide-transferase.